The primary structure comprises 396 residues: Methylthioribose kinase (396 aa).

Residues N44, K61, and 115–117 (EDL) contribute to the ATP site. A substrate-binding site is contributed by D233. 250-252 (DPE) provides a ligand contact to ATP. R340 provides a ligand contact to substrate.

The protein belongs to the methylthioribose kinase family. As to quaternary structure, homodimer.

It carries out the reaction 5-(methylsulfanyl)-D-ribose + ATP = 5-(methylsulfanyl)-alpha-D-ribose 1-phosphate + ADP + H(+). It participates in amino-acid biosynthesis; L-methionine biosynthesis via salvage pathway; S-methyl-5-thio-alpha-D-ribose 1-phosphate from S-methyl-5'-thioadenosine (hydrolase route): step 2/2. Functionally, catalyzes the phosphorylation of methylthioribose into methylthioribose-1-phosphate. This is Methylthioribose kinase from Geobacillus thermodenitrificans (strain NG80-2).